The chain runs to 924 residues: TBC1 domain family member 2A (924 aa).

The disordered stretch occupies residues 1–38; sequence MEDTPERTPSSESIQPPGLAREPEVTSPGDSEGCARPL. The interval 1 to 167 is interaction with CADH1; that stretch reads MEDTPERTPS…TENGPTLHLK (167 aa). The PH domain occupies 42-140; it reads PKKLCGYLSK…WLQQLQMKRW (99 aa). Positions 228 to 296 are disordered; sequence KQAQATAHGP…KRQSNTFPFF (69 aa). Over residues 261 to 270 the composition is skewed to basic and acidic residues; it reads IPEKEPEDPP. The tract at residues 297–435 is interaction with RAC1; it reads SDGLARSRTA…KLTEDLAQPQ (139 aa). 3 coiled-coil regions span residues 303–332, 361–418, and 444–477; these read SRTAQEKVVALEQQVLMLTKELKSQKELVI, LELV…AKQQ, and FLSQQERLEHLKDDMEAYRTQNRFLNSEIHQVTK. The Rab-GAP TBC domain maps to 621-813; the sequence is GVPREHRPRV…RVWDAFLYEG (193 aa). The stretch at 871-906 forms a coiled coil; it reads MKQLRQLRAAHRERLEAELRELELLKAEYLERRASR. Ser916 carries the post-translational modification Phosphoserine.

As to quaternary structure, interacts with activated RAC1 and CDH1.

It localises to the cytoplasm. The protein resides in the cytoplasmic vesicle. It is found in the cell junction. Its function is as follows. Acts as a GTPase-activating protein for RAB7A. Signal effector acting as a linker between RAC1 and RAB7A, leading to RAB7A inactivation and subsequent inhibition of cadherin degradation and reduced cell-cell adhesion. This chain is TBC1 domain family member 2A (Tbc1d2), found in Rattus norvegicus (Rat).